The following is a 225-amino-acid chain: Guanylate kinase (225 aa).

Residues 20-198 (GNLFMVVAPS…ALSELQCLVA (179 aa)) enclose the Guanylate kinase-like domain. 27–34 (APSGAGKS) lines the ATP pocket.

Belongs to the guanylate kinase family.

Its subcellular location is the cytoplasm. The catalysed reaction is GMP + ATP = GDP + ADP. Essential for recycling GMP and indirectly, cGMP. This chain is Guanylate kinase, found in Paraburkholderia xenovorans (strain LB400).